The chain runs to 485 residues: MFAHTALRQRCAKWLLATGLFLLLGACVEKPSTLERVKEDGVLRVITRNSPATYFQDRNGETGFEYELVQHFADDLGVKLQIETADNLDELYDALGKPSGPVLAAAGLVSSERRKTQVRYSHPYLEVTPQVIYRNGRPRPTGAKGLVGKKIMVLKGSSHADQLAELKKQYPALQYEESDAVEVVDLLRMVDEGQIDLTLVDSNELAMNQVYFPNVRVAFDLGETRDQRWAVAAGEDNSLLNEINEYLDKAQKNGTLQRLKDRYYGHVDVLGYVGAYTFAQHLQQRLPKYEKHFKSYAKVEQVDWRLLAAIGYQESMWQPEVTSKTGVRGLMMLTQRTAQAMGVSNRLDPRQSIQGGAKYFMKIKEELDDSIKEPDRTWFALAAYNVGGGHLEDARTLAKREKLNPNKWLDVKKMLPRLAQKQWYRQTKYGYARGGEPVHFVANIRRYYDILTWVTQPQLEGQVAEGNLHVPGVNKDKPADKSSPM.

An N-terminal signal peptide occupies residues 1–29; it reads MFAHTALRQRCAKWLLATGLFLLLGACVE. The segment at 30-267 is non-LT domain; it reads KPSTLERVKE…RLKDRYYGHV (238 aa). An LT domain region spans residues 268–485; that stretch reads DVLGYVGAYT…DKPADKSSPM (218 aa). The active site involves E314. Positions 465-485 are disordered; the sequence is EGNLHVPGVNKDKPADKSSPM. Over residues 474 to 485 the composition is skewed to basic and acidic residues; that stretch reads NKDKPADKSSPM.

It in the N-terminal section; belongs to the bacterial solute-binding protein 3 family. The protein in the C-terminal section; belongs to the transglycosylase Slt family.

The protein localises to the cell outer membrane. It carries out the reaction Exolytic cleavage of the (1-&gt;4)-beta-glycosidic linkage between N-acetylmuramic acid (MurNAc) and N-acetylglucosamine (GlcNAc) residues in peptidoglycan, from either the reducing or the non-reducing ends of the peptidoglycan chains, with concomitant formation of a 1,6-anhydrobond in the MurNAc residue.. In terms of biological role, murein-degrading enzyme that degrades murein glycan strands and insoluble, high-molecular weight murein sacculi, with the concomitant formation of a 1,6-anhydromuramoyl product. Lytic transglycosylases (LTs) play an integral role in the metabolism of the peptidoglycan (PG) sacculus. Their lytic action creates space within the PG sacculus to allow for its expansion as well as for the insertion of various structures such as secretion systems and flagella. This Pseudomonas putida (strain ATCC 47054 / DSM 6125 / CFBP 8728 / NCIMB 11950 / KT2440) protein is Membrane-bound lytic murein transglycosylase F.